The primary structure comprises 166 residues: Putative universal stress protein SE_1385 (166 aa).

The protein belongs to the universal stress protein A family.

The protein localises to the cytoplasm. This chain is Putative universal stress protein SE_1385, found in Staphylococcus epidermidis (strain ATCC 12228 / FDA PCI 1200).